The sequence spans 668 residues: Methionine--tRNA ligase (668 aa).

The 'HIGH' region signature appears at 11-21 (AYTNGPLHIGH). Zn(2+)-binding residues include Cys146, Cys149, Cys159, and Cys162. The short motif at 332-336 (KMSTS) is the 'KMSKS' region element. Position 335 (Thr335) interacts with ATP. In terms of domain architecture, tRNA-binding spans 567–668 (EFNRLDLRVG…REVEPGERIR (102 aa)).

It belongs to the class-I aminoacyl-tRNA synthetase family. MetG type 1 subfamily. As to quaternary structure, homodimer. Zn(2+) serves as cofactor.

It localises to the cytoplasm. It carries out the reaction tRNA(Met) + L-methionine + ATP = L-methionyl-tRNA(Met) + AMP + diphosphate. Functionally, is required not only for elongation of protein synthesis but also for the initiation of all mRNA translation through initiator tRNA(fMet) aminoacylation. This is Methionine--tRNA ligase from Methanopyrus kandleri (strain AV19 / DSM 6324 / JCM 9639 / NBRC 100938).